A 123-amino-acid chain; its full sequence is Large ribosomal subunit protein bL12 (123 aa).

The protein belongs to the bacterial ribosomal protein bL12 family. As to quaternary structure, homodimer. Part of the ribosomal stalk of the 50S ribosomal subunit. Forms a multimeric L10(L12)X complex, where L10 forms an elongated spine to which 2 to 4 L12 dimers bind in a sequential fashion. Binds GTP-bound translation factors.

Functionally, forms part of the ribosomal stalk which helps the ribosome interact with GTP-bound translation factors. Is thus essential for accurate translation. In Geobacillus thermodenitrificans (strain NG80-2), this protein is Large ribosomal subunit protein bL12.